The sequence spans 222 residues: Oligoribonuclease (222 aa).

The tract at residues 19–38 (PMASSSSTGKQEESVNGSLE) is disordered. Polar residues predominate over residues 21-35 (ASSSSTGKQEESVNG). An Exonuclease domain is found at 46 to 210 (LVWIDLEMTG…DDIRESIKEL (165 aa)). His-167 is an active-site residue.

It belongs to the oligoribonuclease family.

Its function is as follows. 3'-to-5' exoribonuclease specific for small oligoribonucleotides. This is Oligoribonuclease from Arabidopsis thaliana (Mouse-ear cress).